The following is an 859-amino-acid chain: METQRNYPSLWRWGTLILGMLLICSVVGNLWVTVYYGVPVWKEAKTTLFCASDAKAYDTERHNVWATHACVPTDPNPQEMVLENVTETFNMWVNDMVEQMHTDIISLWDQSLKPCVKLTPLCVTLDCSSVNATNVTKSNNSTDINIGEIQEQRNCSFNVTTAIRDKNQKVHALFYRADIVQIDEGERNKSDNHYRLINCNTSVIKQACPKVSFEPIPIHYCAPAGFAILKCNGKKFNGTGPCTNVSTVQCTHGIRPVVSTQLLLNGSLAEVEEVIIRSKNITDNTKNIIVQLNEPVQINCTRTGNNTRKSIRIGPGQAFYATGDIIGDIRRAYCNISGKQWNETLHKVITKLGSYFDNKTIILQPPAGGDIEIITHSFNCGGEFFYCNTTKLFNSTWTNSSYTNDTYNSNSTEDITGNITLQCKIKQIVNMWQRVGQAMYAPPIRGNITCISNITGLILTFDRNNTNNVTFRPGGGDMRDNWRSELYKYKVVKIEPLGVAPTEARRRVVEREKRAVGMGAFFLGFLGAAGSTMGAASITLTVQARQLLSGIVQQQSNLLRAIQAQQHMLQLTVWGIKQLQARVLAVERYLKDQQLLGIWGCSGKLICTTNVPWNSSWSNKSLDEIWDNMTWMEWDKQINNYTDEIYRLLEVSQNQQEKNEQDLLALDKWANLWNWFSITNWLWYIRIFIMIVGGIIGLRIVFAVLSIVNRVRQGYSPLSLQTLIPNQRGPDRPREIEEEGGEQDRDRSIRLVNGFLPLVWEDLRNLCLFSYRRLRDLLSIVARTVELLGRRGWEALKLLGNLLLYWGQELKNSAISLLNTTAIAVAEGTDRIIELVQRAWRAILHIPRRIRQGFERALL.

Residues 1–28 form the signal peptide; the sequence is METQRNYPSLWRWGTLILGMLLICSVVG. Residues 29 to 687 lie on the Extracellular side of the membrane; sequence NLWVTVYYGV…ITNWLWYIRI (659 aa). Cysteines 50 and 70 form a disulfide. N84, N131, N134, N139, N140, N154, N158, N188, N200, N237, N244, N265, N280, N299, N305, N335, N342, and N358 each carry an N-linked (GlcNAc...) asparagine; by host glycan. 5 disulfide bridges follow: C115-C208, C122-C199, C127-C155, C221-C250, and C231-C242. Residues 127–154 are V1; that stretch reads CSSVNATNVTKSNNSTDINIGEIQEQRN. Positions 155–199 are V2; sequence CSFNVTTAIRDKNQKVHALFYRADIVQIDEGERNKSDNHYRLINC. Residues 300 to 333 form a V3 region; sequence CTRTGNNTRKSIRIGPGQAFYATGDIIGDIRRAY. A disulfide bond links C300 and C334. The segment at 366-376 is CD4-binding loop; sequence PAGGDIEIITH. 2 cysteine pairs are disulfide-bonded: C380–C450 and C387–C423. Residues 387–423 form a V4 region; it reads CNTTKLFNSTWTNSSYTNDTYNSNSTEDITGNITLQC. N-linked (GlcNAc...) asparagine; by host glycosylation is found at N388, N394, N399, N404, N410, N418, N447, N453, N464, and N468. Residues 466-474 form a V5 region; that stretch reads TNNVTFRPG. A fusion peptide region spans residues 515-535; that stretch reads AVGMGAFFLGFLGAAGSTMGA. The segment at 577–595 is immunosuppression; sequence KQLQARVLAVERYLKDQQL. A disulfide bond links C601 and C607. N614, N619, N628, and N640 each carry an N-linked (GlcNAc...) asparagine; by host glycan. Residues 636-670 adopt a coiled-coil conformation; sequence KQINNYTDEIYRLLEVSQNQQEKNEQDLLALDKWA. An MPER; binding to GalCer region spans residues 665-686; that stretch reads ALDKWANLWNWFSITNWLWYIR. Residues 688 to 708 form a helical membrane-spanning segment; sequence FIMIVGGIIGLRIVFAVLSIV. The Cytoplasmic portion of the chain corresponds to 709 to 859; that stretch reads NRVRQGYSPL…IRQGFERALL (151 aa). Positions 715–718 match the YXXL motif; contains endocytosis signal motif; the sequence is YSPL. Residues 724-743 form a disordered region; that stretch reads IPNQRGPDRPREIEEEGGEQ. A lipid anchor (S-palmitoyl cysteine; by host) is attached at C767. The Di-leucine internalization motif motif lies at 858–859; it reads LL.

The protein belongs to the HIV-1 env protein family. The mature envelope protein (Env) consists of a homotrimer of non-covalently associated gp120-gp41 heterodimers. The resulting complex protrudes from the virus surface as a spike. There seems to be as few as 10 spikes on the average virion. Interacts with host CD4, CCR5 and CXCR4. Gp120 also interacts with the C-type lectins CD209/DC-SIGN and CLEC4M/DC-SIGNR (collectively referred to as DC-SIGN(R)). Gp120 and gp41 interact with GalCer. Gp120 interacts with host ITGA4/ITGB7 complex; on CD4+ T-cells, this interaction results in rapid activation of integrin ITGAL/LFA-1, which facilitates efficient cell-to-cell spreading of HIV-1. Gp120 interacts with cell-associated heparan sulfate; this interaction increases virus infectivity on permissive cells and may be involved in infection of CD4- cells. In terms of assembly, the mature envelope protein (Env) consists of a homotrimer of non-covalently associated gp120-gp41 heterodimers. The resulting complex protrudes from the virus surface as a spike. There seems to be as few as 10 spikes on the average virion. Highly glycosylated by host. The high number of glycan on the protein is reffered to as 'glycan shield' because it contributes to hide protein sequence from adaptive immune system. Post-translationally, palmitoylation of the transmembrane protein and of Env polyprotein (prior to its proteolytic cleavage) is essential for their association with host cell membrane lipid rafts. Palmitoylation is therefore required for envelope trafficking to classical lipid rafts, but not for viral replication. In terms of processing, specific enzymatic cleavages in vivo yield mature proteins. Envelope glycoproteins are synthesized as an inactive precursor that is heavily N-glycosylated and processed likely by host cell furin in the Golgi to yield the mature SU and TM proteins. The cleavage site between SU and TM requires the minimal sequence [KR]-X-[KR]-R. About 2 of the 9 disulfide bonds of gp41 are reduced by P4HB/PDI, following binding to CD4 receptor.

The protein resides in the virion membrane. It is found in the host cell membrane. The protein localises to the host endosome membrane. Functionally, oligomerizes in the host endoplasmic reticulum into predominantly trimers. In a second time, gp160 transits in the host Golgi, where glycosylation is completed. The precursor is then proteolytically cleaved in the trans-Golgi and thereby activated by cellular furin or furin-like proteases to produce gp120 and gp41. Attaches the virus to the host lymphoid cell by binding to the primary receptor CD4. This interaction induces a structural rearrangement creating a high affinity binding site for a chemokine coreceptor like CXCR4 and/or CCR5. Acts as a ligand for CD209/DC-SIGN and CLEC4M/DC-SIGNR, which are respectively found on dendritic cells (DCs), and on endothelial cells of liver sinusoids and lymph node sinuses. These interactions allow capture of viral particles at mucosal surfaces by these cells and subsequent transmission to permissive cells. HIV subverts the migration properties of dendritic cells to gain access to CD4+ T-cells in lymph nodes. Virus transmission to permissive T-cells occurs either in trans (without DCs infection, through viral capture and transmission), or in cis (following DCs productive infection, through the usual CD4-gp120 interaction), thereby inducing a robust infection. In trans infection, bound virions remain infectious over days and it is proposed that they are not degraded, but protected in non-lysosomal acidic organelles within the DCs close to the cell membrane thus contributing to the viral infectious potential during DCs' migration from the periphery to the lymphoid tissues. On arrival at lymphoid tissues, intact virions recycle back to DCs' cell surface allowing virus transmission to CD4+ T-cells. In terms of biological role, acts as a class I viral fusion protein. Under the current model, the protein has at least 3 conformational states: pre-fusion native state, pre-hairpin intermediate state, and post-fusion hairpin state. During fusion of viral and target intracellular membranes, the coiled coil regions (heptad repeats) assume a trimer-of-hairpins structure, positioning the fusion peptide in close proximity to the C-terminal region of the ectodomain. The formation of this structure appears to drive apposition and subsequent fusion of viral and target cell membranes. Complete fusion occurs in host cell endosomes and is dynamin-dependent, however some lipid transfer might occur at the plasma membrane. The virus undergoes clathrin-dependent internalization long before endosomal fusion, thus minimizing the surface exposure of conserved viral epitopes during fusion and reducing the efficacy of inhibitors targeting these epitopes. Membranes fusion leads to delivery of the nucleocapsid into the cytoplasm. The polypeptide is Envelope glycoprotein gp160 (Human immunodeficiency virus type 1 group M subtype H (isolate VI991) (HIV-1)).